The primary structure comprises 95 residues: Co-chaperonin GroES (95 aa).

Belongs to the GroES chaperonin family. Heptamer of 7 subunits arranged in a ring. Interacts with the chaperonin GroEL.

Its subcellular location is the cytoplasm. Functionally, together with the chaperonin GroEL, plays an essential role in assisting protein folding. The GroEL-GroES system forms a nano-cage that allows encapsulation of the non-native substrate proteins and provides a physical environment optimized to promote and accelerate protein folding. GroES binds to the apical surface of the GroEL ring, thereby capping the opening of the GroEL channel. The polypeptide is Co-chaperonin GroES (Rhizorhabdus wittichii (strain DSM 6014 / CCUG 31198 / JCM 15750 / NBRC 105917 / EY 4224 / RW1) (Sphingomonas wittichii)).